A 242-amino-acid polypeptide reads, in one-letter code: Biosynthetic peptidoglycan transglycosylase (242 aa).

The helical transmembrane segment at 19-39 (ILAALAVFWGGGIALFSVVPV) threads the bilayer.

Belongs to the glycosyltransferase 51 family.

It is found in the cell inner membrane. It carries out the reaction [GlcNAc-(1-&gt;4)-Mur2Ac(oyl-L-Ala-gamma-D-Glu-L-Lys-D-Ala-D-Ala)](n)-di-trans,octa-cis-undecaprenyl diphosphate + beta-D-GlcNAc-(1-&gt;4)-Mur2Ac(oyl-L-Ala-gamma-D-Glu-L-Lys-D-Ala-D-Ala)-di-trans,octa-cis-undecaprenyl diphosphate = [GlcNAc-(1-&gt;4)-Mur2Ac(oyl-L-Ala-gamma-D-Glu-L-Lys-D-Ala-D-Ala)](n+1)-di-trans,octa-cis-undecaprenyl diphosphate + di-trans,octa-cis-undecaprenyl diphosphate + H(+). It functions in the pathway cell wall biogenesis; peptidoglycan biosynthesis. Its function is as follows. Peptidoglycan polymerase that catalyzes glycan chain elongation from lipid-linked precursors. In Salmonella choleraesuis (strain SC-B67), this protein is Biosynthetic peptidoglycan transglycosylase.